The sequence spans 361 residues: Ribosomal RNA large subunit methyltransferase M (361 aa).

S-adenosyl-L-methionine contacts are provided by residues Ser190, 223 to 226, Asp242, Asp262, and Asp280; that span reads CPGG. Lys309 functions as the Proton acceptor in the catalytic mechanism.

Belongs to the class I-like SAM-binding methyltransferase superfamily. RNA methyltransferase RlmE family. RlmM subfamily. As to quaternary structure, monomer.

The protein localises to the cytoplasm. The enzyme catalyses cytidine(2498) in 23S rRNA + S-adenosyl-L-methionine = 2'-O-methylcytidine(2498) in 23S rRNA + S-adenosyl-L-homocysteine + H(+). In terms of biological role, catalyzes the 2'-O-methylation at nucleotide C2498 in 23S rRNA. This is Ribosomal RNA large subunit methyltransferase M from Actinobacillus pleuropneumoniae serotype 7 (strain AP76).